Here is a 226-residue protein sequence, read N- to C-terminus: Protein transport protein sec20 (226 aa).

Residues 1–189 (MADVLNALEE…IKSLKLSDRS (189 aa)) are Cytoplasmic-facing. A coiled-coil region spans residues 53-75 (LRYEKAVQEYIRLNRRYRNKIAS). A Phosphoserine modification is found at Ser-97. Residues 190–210 (DYFLVVSGFGFFIFVVVYLLF) traverse the membrane as a helical; Anchor for type IV membrane protein segment. Residues 211-226 (KRIVWPILSMFLWFLR) are Lumenal-facing.

Belongs to the SEC20 family. Component of a SNARE complex consisting of ufe1, sec20, sec22 and use1. Interacts with tip20 through its cytoplasmic domain.

It is found in the endoplasmic reticulum membrane. Its function is as follows. SNARE required for targeting and fusion of Golgi-derived retrograde transport vesicles with the ER. In Schizosaccharomyces pombe (strain 972 / ATCC 24843) (Fission yeast), this protein is Protein transport protein sec20.